The following is a 154-amino-acid chain: NADPH-dependent 7-cyano-7-deazaguanine reductase (154 aa).

Residues 1 to 21 (MPNTDVSSLSMLGHQTETASS) show a composition bias toward polar residues. The segment at 1–26 (MPNTDVSSLSMLGHQTETASSPEEAV) is disordered. The Thioimide intermediate role is filled by Cys-52. Residue Asp-59 is the Proton donor of the active site. Residues 74–76 (VES) and 93–94 (HE) contribute to the substrate site.

This sequence belongs to the GTP cyclohydrolase I family. QueF type 1 subfamily.

It localises to the cytoplasm. It catalyses the reaction 7-aminomethyl-7-carbaguanine + 2 NADP(+) = 7-cyano-7-deazaguanine + 2 NADPH + 3 H(+). It functions in the pathway tRNA modification; tRNA-queuosine biosynthesis. In terms of biological role, catalyzes the NADPH-dependent reduction of 7-cyano-7-deazaguanine (preQ0) to 7-aminomethyl-7-deazaguanine (preQ1). The chain is NADPH-dependent 7-cyano-7-deazaguanine reductase from Rhizobium etli (strain ATCC 51251 / DSM 11541 / JCM 21823 / NBRC 15573 / CFN 42).